A 342-amino-acid polypeptide reads, in one-letter code: Uroporphyrinogen decarboxylase (342 aa).

Residues 26-30, Asp-76, Tyr-150, Ser-205, and His-321 each bind substrate; that span reads RQAGR.

This sequence belongs to the uroporphyrinogen decarboxylase family. In terms of assembly, homodimer.

The protein resides in the cytoplasm. It catalyses the reaction uroporphyrinogen III + 4 H(+) = coproporphyrinogen III + 4 CO2. It functions in the pathway porphyrin-containing compound metabolism; protoporphyrin-IX biosynthesis; coproporphyrinogen-III from 5-aminolevulinate: step 4/4. Its function is as follows. Catalyzes the decarboxylation of four acetate groups of uroporphyrinogen-III to yield coproporphyrinogen-III. This Sphingopyxis alaskensis (strain DSM 13593 / LMG 18877 / RB2256) (Sphingomonas alaskensis) protein is Uroporphyrinogen decarboxylase.